Consider the following 487-residue polypeptide: Malonate-semialdehyde dehydrogenase 2 (487 aa).

The NAD(+) site is built by Phe-154, Lys-178, Glu-181, Arg-182, and Ser-231. The Nucleophile role is filled by Cys-286. An NAD(+)-binding site is contributed by Glu-386.

The protein belongs to the aldehyde dehydrogenase family. IolA subfamily. In terms of assembly, homotetramer.

The enzyme catalyses 3-oxopropanoate + NAD(+) + CoA + H2O = hydrogencarbonate + acetyl-CoA + NADH + H(+). It catalyses the reaction 2-methyl-3-oxopropanoate + NAD(+) + CoA + H2O = propanoyl-CoA + hydrogencarbonate + NADH + H(+). It participates in polyol metabolism; myo-inositol degradation into acetyl-CoA; acetyl-CoA from myo-inositol: step 7/7. In terms of biological role, catalyzes the oxidation of malonate semialdehyde (MSA) and methylmalonate semialdehyde (MMSA) into acetyl-CoA and propanoyl-CoA, respectively. Is involved in a myo-inositol catabolic pathway. Bicarbonate, and not CO2, is the end-product of the enzymatic reaction. The sequence is that of Malonate-semialdehyde dehydrogenase 2 from Bacillus thuringiensis (strain Al Hakam).